A 685-amino-acid chain; its full sequence is Diphthine--ammonia ligase (685 aa).

The protein in the C-terminal section; belongs to the RutC family. This sequence in the N-terminal section; belongs to the Diphthine--ammonia ligase family. In terms of assembly, interacts with elongation factor 2 (eEF-2; EFT1 or EFT2).

The protein localises to the cytoplasm. It catalyses the reaction diphthine-[translation elongation factor 2] + NH4(+) + ATP = diphthamide-[translation elongation factor 2] + AMP + diphosphate + H(+). Its pathway is protein modification; peptidyl-diphthamide biosynthesis. Functionally, amidase that catalyzes the last step of diphthamide biosynthesis using ammonium and ATP. Diphthamide biosynthesis consists in the conversion of an L-histidine residue in the translation elongation factor eEF-2 (EFT1 or EFT2) to diphthamide. This chain is Diphthine--ammonia ligase (DPH6), found in Saccharomyces cerevisiae (strain ATCC 204508 / S288c) (Baker's yeast).